Here is a 163-residue protein sequence, read N- to C-terminus: 2-C-methyl-D-erythritol 2,4-cyclodiphosphate synthase (163 aa).

Residues D12 and H14 each coordinate a divalent metal cation. Residues 12-14 (DVH) and 38-39 (HS) each bind 4-CDP-2-C-methyl-D-erythritol 2-phosphate. A divalent metal cation is bound at residue H46. Residues 60-62 (DIG), 136-139 (TTSE), F143, and R146 contribute to the 4-CDP-2-C-methyl-D-erythritol 2-phosphate site.

The protein belongs to the IspF family. As to quaternary structure, homotrimer. A divalent metal cation serves as cofactor.

It carries out the reaction 4-CDP-2-C-methyl-D-erythritol 2-phosphate = 2-C-methyl-D-erythritol 2,4-cyclic diphosphate + CMP. It functions in the pathway isoprenoid biosynthesis; isopentenyl diphosphate biosynthesis via DXP pathway; isopentenyl diphosphate from 1-deoxy-D-xylulose 5-phosphate: step 4/6. Involved in the biosynthesis of isopentenyl diphosphate (IPP) and dimethylallyl diphosphate (DMAPP), two major building blocks of isoprenoid compounds. Catalyzes the conversion of 4-diphosphocytidyl-2-C-methyl-D-erythritol 2-phosphate (CDP-ME2P) to 2-C-methyl-D-erythritol 2,4-cyclodiphosphate (ME-CPP) with a corresponding release of cytidine 5-monophosphate (CMP). The sequence is that of 2-C-methyl-D-erythritol 2,4-cyclodiphosphate synthase from Xanthomonas oryzae pv. oryzae (strain MAFF 311018).